Consider the following 540-residue polypeptide: Chaperonin GroEL (540 aa).

ATP contacts are provided by residues 30 to 33 (TLGP), Lys-51, 87 to 91 (DGTTT), Gly-415, and Asp-496.

This sequence belongs to the chaperonin (HSP60) family. As to quaternary structure, forms a cylinder of 14 subunits composed of two heptameric rings stacked back-to-back. Interacts with the co-chaperonin GroES.

Its subcellular location is the cytoplasm. The enzyme catalyses ATP + H2O + a folded polypeptide = ADP + phosphate + an unfolded polypeptide.. In terms of biological role, together with its co-chaperonin GroES, plays an essential role in assisting protein folding. The GroEL-GroES system forms a nano-cage that allows encapsulation of the non-native substrate proteins and provides a physical environment optimized to promote and accelerate protein folding. The chain is Chaperonin GroEL from Thermodesulfovibrio yellowstonii (strain ATCC 51303 / DSM 11347 / YP87).